We begin with the raw amino-acid sequence, 57 residues long: Small ribosomal subunit protein bS21 (57 aa).

A disordered region spans residues 24-57 (SKSGTLQESRKREFYEKPSVKRKKKSEAARKRKF). Positions 31-42 (ESRKREFYEKPS) are enriched in basic and acidic residues. The span at 43 to 57 (VKRKKKSEAARKRKF) shows a compositional bias: basic residues.

It belongs to the bacterial ribosomal protein bS21 family.

The protein is Small ribosomal subunit protein bS21 (rpsU) of Listeria innocua serovar 6a (strain ATCC BAA-680 / CLIP 11262).